Consider the following 470-residue polypeptide: Cysteine--tRNA ligase (470 aa).

Zn(2+) is bound at residue cysteine 28. A 'HIGH' region motif is present at residues 30–40; it reads PTVYNYIHIGN. Positions 212, 237, and 241 each coordinate Zn(2+). Positions 271 to 275 match the 'KMSKS' region motif; it reads KMSKS. Lysine 274 contacts ATP.

This sequence belongs to the class-I aminoacyl-tRNA synthetase family. In terms of assembly, monomer. Zn(2+) serves as cofactor.

Its subcellular location is the cytoplasm. The enzyme catalyses tRNA(Cys) + L-cysteine + ATP = L-cysteinyl-tRNA(Cys) + AMP + diphosphate. This chain is Cysteine--tRNA ligase, found in Ligilactobacillus salivarius (strain UCC118) (Lactobacillus salivarius).